The sequence spans 431 residues: 5-methylthioadenosine/S-adenosylhomocysteine deaminase (431 aa).

Positions 66 and 68 each coordinate Zn(2+). Substrate is bound by residues glutamate 95, arginine 147, and histidine 185. Position 212 (histidine 212) interacts with Zn(2+). The substrate site is built by glutamate 215 and aspartate 300. A Zn(2+)-binding site is contributed by aspartate 300.

The protein belongs to the metallo-dependent hydrolases superfamily. MTA/SAH deaminase family. Requires Zn(2+) as cofactor.

The catalysed reaction is S-adenosyl-L-homocysteine + H2O + H(+) = S-inosyl-L-homocysteine + NH4(+). It catalyses the reaction S-methyl-5'-thioadenosine + H2O + H(+) = S-methyl-5'-thioinosine + NH4(+). In terms of biological role, catalyzes the deamination of 5-methylthioadenosine and S-adenosyl-L-homocysteine into 5-methylthioinosine and S-inosyl-L-homocysteine, respectively. Is also able to deaminate adenosine. The chain is 5-methylthioadenosine/S-adenosylhomocysteine deaminase from Acetivibrio thermocellus (strain ATCC 27405 / DSM 1237 / JCM 9322 / NBRC 103400 / NCIMB 10682 / NRRL B-4536 / VPI 7372) (Clostridium thermocellum).